The chain runs to 466 residues: Soluble pyridine nucleotide transhydrogenase (466 aa).

36–45 contacts FAD; it reads ERYQNVGGGC.

The protein belongs to the class-I pyridine nucleotide-disulfide oxidoreductase family. As to quaternary structure, homooligomer; probable homooctamer. FAD serves as cofactor.

It localises to the cytoplasm. It catalyses the reaction NAD(+) + NADPH = NADH + NADP(+). Its function is as follows. Conversion of NADPH, generated by peripheral catabolic pathways, to NADH, which can enter the respiratory chain for energy generation. This chain is Soluble pyridine nucleotide transhydrogenase, found in Shigella flexneri.